The primary structure comprises 134 residues: Small ribosomal subunit protein uS11 (134 aa).

It belongs to the universal ribosomal protein uS11 family. Part of the 30S ribosomal subunit. Interacts with proteins S7 and S18. Binds to IF-3.

Located on the platform of the 30S subunit, it bridges several disparate RNA helices of the 16S rRNA. Forms part of the Shine-Dalgarno cleft in the 70S ribosome. This chain is Small ribosomal subunit protein uS11, found in Paracidovorax citrulli (strain AAC00-1) (Acidovorax citrulli).